Here is a 158-residue protein sequence, read N- to C-terminus: Immunoglobulin J chain (158 aa).

The first 22 residues, 1 to 22 (MKNHLFFWGVLAIFVQAVLVTA), serve as a signal peptide directing secretion. Intrachain disulfides connect Cys36–Cys122, Cys95–Cys115, and Cys130–Cys155. Asn72 is a glycosylation site (N-linked (GlcNAc...) (complex) asparagine).

As to quaternary structure, part of the secretory IgA (sIgA) complex that consists of two, four or five IgA monomers, and two additional non-Ig polypeptides, namely the JCHAIN and the secretory component (the proteolytic product of PIGR). Part of the secretory IgM (sIgM) complex that consist of five IgM monomers, and two additional non-Ig polypeptides, namely the JCHAIN and the secretory component (the proteolytic product of PIGR). JCHAIN-containing IgM interacts (via CH4 domain) with FCRM (via Ig-like domain). In terms of processing, N-glycosylated. N-glycans attached to Asn-72 varies from truncated, differentially fucosylated to sialylated (NeuGc) complex types: Man3GlcNAc2; GlcNAc2Man3GlcNAc2(Fuc); Gal1GlcNAc1Man3GlcNAc2; GlcNAc2Man3GlcNAc2; GlcNAc1Man3GlcNAc2; GlcNAc1Man2GlcNAc2 and NeuGc1Gal1GlcNAc2Man3GlcNAc2.

The protein localises to the secreted. Functionally, serves to link two monomer units of either IgM or IgA. In the case of IgM, the J chain-joined dimer is a nucleating unit for the IgM pentamer, and in the case of IgA it induces dimers and/or larger polymers. It also helps to bind these immunoglobulins to secretory component. The chain is Immunoglobulin J chain (JCHAIN) from Equus asinus (Donkey).